A 277-amino-acid polypeptide reads, in one-letter code: Large ribosomal subunit protein uL15c (277 aa).

Residues 1–67 constitute a chloroplast transit peptide; sequence MATPLSISSN…FARPLVVVSQ (67 aa). At Thr68 the chain carries N-acetylthreonine. A disordered region spans residues 81-125; the sequence is FRLDNLGPQPGSRKKQKRKGRGISAGQGASCGFGMRGQKSRSGPG. Over residues 92–101 the composition is skewed to basic residues; that stretch reads SRKKQKRKGR. A compositionally biased stretch (gly residues) spans 103–115; it reads ISAGQGASCGFGM.

It belongs to the universal ribosomal protein uL15 family. Part of the 50S ribosomal subunit.

Its subcellular location is the plastid. The protein localises to the chloroplast. This Arabidopsis thaliana (Mouse-ear cress) protein is Large ribosomal subunit protein uL15c (RPL15).